A 129-amino-acid chain; its full sequence is uncharacterized protein (129 aa).

The next 2 membrane-spanning stretches (helical) occupy residues 35–55 (IVDG…WKIP) and 98–118 (ILLL…IILL).

It localises to the membrane. This is an uncharacterized protein from Saccharomyces cerevisiae (strain ATCC 204508 / S288c) (Baker's yeast).